Here is a 214-residue protein sequence, read N- to C-terminus: Putative ankyrin repeat protein R844 (214 aa).

5 ANK repeats span residues 41 to 70, 81 to 110, 111 to 140, 142 to 170, and 172 to 200; these read VEKNMIEHIVENGYLDVLKYIDSLKNQNKF, SLDKYLIMSCEFGHLEMTKYFVSQGANVKT, DNNMPLRLASQNGHIDTIKYLIENSVDVRA, NDCALRMASLFGHINVVKYLVDMGADVTS, and NNFAIIHTARSGRLELAKYLAEKGADIRA.

The protein is Putative ankyrin repeat protein R844 of Acanthamoeba polyphaga mimivirus (APMV).